Consider the following 512-residue polypeptide: Maturase K (512 aa).

The protein belongs to the intron maturase 2 family. MatK subfamily.

It localises to the plastid. The protein localises to the chloroplast. Usually encoded in the trnK tRNA gene intron. Probably assists in splicing its own and other chloroplast group II introns. The sequence is that of Maturase K from Acer campestre (Field maple).